A 467-amino-acid polypeptide reads, in one-letter code: Light-independent protochlorophyllide reductase subunit N (467 aa).

Residues Cys-22, Cys-47, and Cys-107 each coordinate [4Fe-4S] cluster.

It belongs to the BchN/ChlN family. Protochlorophyllide reductase is composed of three subunits; ChlL, ChlN and ChlB. Forms a heterotetramer of two ChlB and two ChlN subunits. The cofactor is [4Fe-4S] cluster.

It is found in the plastid. The protein localises to the chloroplast. It catalyses the reaction chlorophyllide a + oxidized 2[4Fe-4S]-[ferredoxin] + 2 ADP + 2 phosphate = protochlorophyllide a + reduced 2[4Fe-4S]-[ferredoxin] + 2 ATP + 2 H2O. The protein operates within porphyrin-containing compound metabolism; chlorophyll biosynthesis (light-independent). Functionally, component of the dark-operative protochlorophyllide reductase (DPOR) that uses Mg-ATP and reduced ferredoxin to reduce ring D of protochlorophyllide (Pchlide) to form chlorophyllide a (Chlide). This reaction is light-independent. The NB-protein (ChlN-ChlB) is the catalytic component of the complex. The polypeptide is Light-independent protochlorophyllide reductase subunit N (Pinus thunbergii (Japanese black pine)).